The chain runs to 600 residues: NADH-quinone oxidoreductase subunit C/D (600 aa).

Positions 1–190 (MVNNMTDLTA…DPFELTKAKQ (190 aa)) are NADH dehydrogenase I subunit C. The NADH dehydrogenase I subunit D stretch occupies residues 214–600 (DFMFLNLGPN…IDFVMSDVDR (387 aa)).

This sequence in the N-terminal section; belongs to the complex I 30 kDa subunit family. The protein in the C-terminal section; belongs to the complex I 49 kDa subunit family. As to quaternary structure, NDH-1 is composed of 13 different subunits. Subunits NuoB, CD, E, F, and G constitute the peripheral sector of the complex.

It localises to the cell inner membrane. The enzyme catalyses a quinone + NADH + 5 H(+)(in) = a quinol + NAD(+) + 4 H(+)(out). NDH-1 shuttles electrons from NADH, via FMN and iron-sulfur (Fe-S) centers, to quinones in the respiratory chain. The immediate electron acceptor for the enzyme in this species is believed to be ubiquinone. Couples the redox reaction to proton translocation (for every two electrons transferred, four hydrogen ions are translocated across the cytoplasmic membrane), and thus conserves the redox energy in a proton gradient. This is NADH-quinone oxidoreductase subunit C/D from Salmonella paratyphi C (strain RKS4594).